We begin with the raw amino-acid sequence, 111 residues long: HTH-type transcriptional regulator SinR (111 aa).

Residues 6–61 (IKQYRKEKGYSLSELAEKAGVAKSYLSSIERNLQTNPSIQFLEKVSAVLDVSVHTL) enclose the HTH cro/C1-type domain. A DNA-binding region (H-T-H motif) is located at residues 17-36 (LSELAEKAGVAKSYLSSIER). The region spanning 65 to 103 (KHETEYDGQLDSEWEKLVRDAMTSGVSKKQFREFLDYQK) is the Sin domain.

Homotetramer in the absence of SinI. Heterodimer with SinI. Interaction with SinI disrupts the SinR tetramer and its repressor activity. Interacts with hpr.

Negative as well as positive regulator of alternate developmental processes that are induced at the end of vegetative growth in response to nutrient depletion. Binds to the alkaline protease (aprE) gene at two sites. Also acts as a repressor of the key sporulation gene spo0A. Negatively regulates transcription of the eps operon, which is responsible for the biosynthesis of an exopolysaccharide involved in biofilm formation; therefore it could govern the transition between a state in which bacteria swim or swarm and a state in which bacteria assemble into multicellular communities. Acts with Hpr as a corepressor of epr expression. Also negatively regulates transcription of the lutABC operon, which is required for lactate utilization. Repressor activity is regulated by SinI. In Bacillus subtilis (strain 168), this protein is HTH-type transcriptional regulator SinR (sinR).